We begin with the raw amino-acid sequence, 459 residues long: Alcohol acyl transferase 1 allele RGc (459 aa).

Catalysis depends on proton acceptor residues His-164 and Asn-385.

Belongs to the plant acyltransferase family. Expressed at very low levels in the skin of ripe fruit.

Functionally, involved in the biosynthesis of volatile esters which confer ripe apple fruit flavor. Alcohol acyl transferase that can use a wide range of alcohols as substrate to produce esters. This Malus domestica (Apple) protein is Alcohol acyl transferase 1 allele RGc.